The sequence spans 251 residues: Triosephosphate isomerase 1 (251 aa).

9 to 11 (NWK) serves as a coordination point for substrate. His95 (electrophile) is an active-site residue. Glu167 acts as the Proton acceptor in catalysis. Residues Gly173, Ser213, and 234–235 (GG) contribute to the substrate site.

The protein belongs to the triosephosphate isomerase family. As to quaternary structure, homodimer.

Its subcellular location is the cytoplasm. It carries out the reaction D-glyceraldehyde 3-phosphate = dihydroxyacetone phosphate. It participates in carbohydrate biosynthesis; gluconeogenesis. It functions in the pathway carbohydrate degradation; glycolysis; D-glyceraldehyde 3-phosphate from glycerone phosphate: step 1/1. In terms of biological role, involved in the gluconeogenesis. Catalyzes stereospecifically the conversion of dihydroxyacetone phosphate (DHAP) to D-glyceraldehyde-3-phosphate (G3P). This is Triosephosphate isomerase 1 from Listeria innocua serovar 6a (strain ATCC BAA-680 / CLIP 11262).